We begin with the raw amino-acid sequence, 226 residues long: Choline transport system permease protein OpuBD (226 aa).

Residues 22-202 (FGRHFLMSAY…VMAVGADLLM (181 aa)) enclose the ABC transmembrane type-1 domain. The next 5 helical transmembrane spans lie at 27-47 (LMSA…GILI), 52-72 (RLSA…ALAM), 73-93 (LAVL…SLFL), 148-168 (ALVI…GGLG), and 182-202 (AIIL…DLLM).

This sequence belongs to the binding-protein-dependent transport system permease family. CysTW subfamily.

The protein localises to the cell membrane. In terms of biological role, involved in a high affinity multicomponent binding-protein-dependent transport system for choline; probably responsible for the translocation of the substrate across the membrane. This chain is Choline transport system permease protein OpuBD (opuBD), found in Bacillus subtilis (strain 168).